The chain runs to 166 residues: Transcription antitermination protein NusB (166 aa).

Residues 1–18 (MISDESDRFNPRDPKPAD) are compositionally biased toward basic and acidic residues. A disordered region spans residues 1–28 (MISDESDRFNPRDPKPADAGKPSKSAKR).

It belongs to the NusB family.

In terms of biological role, involved in transcription antitermination. Required for transcription of ribosomal RNA (rRNA) genes. Binds specifically to the boxA antiterminator sequence of the ribosomal RNA (rrn) operons. This Pseudomonas putida (strain GB-1) protein is Transcription antitermination protein NusB.